Reading from the N-terminus, the 488-residue chain is Glutamate--tRNA ligase (488 aa).

Positions 11–21 match the 'HIGH' region motif; the sequence is PSPTGQIHIGN. Zn(2+) contacts are provided by Cys108, Cys110, Cys135, and Asp137. The 'KMSKS' region motif lies at 252 to 256; that stretch reads KLSKR. Lys255 contributes to the ATP binding site.

It belongs to the class-I aminoacyl-tRNA synthetase family. Glutamate--tRNA ligase type 1 subfamily. Monomer. It depends on Zn(2+) as a cofactor.

It localises to the cytoplasm. It catalyses the reaction tRNA(Glu) + L-glutamate + ATP = L-glutamyl-tRNA(Glu) + AMP + diphosphate. Functionally, catalyzes the attachment of glutamate to tRNA(Glu) in a two-step reaction: glutamate is first activated by ATP to form Glu-AMP and then transferred to the acceptor end of tRNA(Glu). This Natranaerobius thermophilus (strain ATCC BAA-1301 / DSM 18059 / JW/NM-WN-LF) protein is Glutamate--tRNA ligase.